We begin with the raw amino-acid sequence, 467 residues long: Glutamate--tRNA ligase 2 (467 aa).

The 'HIGH' region motif lies at 18 to 28 (PSPTGYLHVGG). Positions 238-242 (PLSKR) match the 'KMSKS' region motif. Position 241 (Lys-241) interacts with ATP.

The protein belongs to the class-I aminoacyl-tRNA synthetase family. Glutamate--tRNA ligase type 1 subfamily. In terms of assembly, monomer.

Its subcellular location is the cytoplasm. The catalysed reaction is tRNA(Glu) + L-glutamate + ATP = L-glutamyl-tRNA(Glu) + AMP + diphosphate. In terms of biological role, catalyzes the attachment of glutamate to tRNA(Glu) in a two-step reaction: glutamate is first activated by ATP to form Glu-AMP and then transferred to the acceptor end of tRNA(Glu). The sequence is that of Glutamate--tRNA ligase 2 from Fervidobacterium nodosum (strain ATCC 35602 / DSM 5306 / Rt17-B1).